A 603-amino-acid chain; its full sequence is DNA mismatch repair protein MutL (603 aa).

Belongs to the DNA mismatch repair MutL/HexB family.

In terms of biological role, this protein is involved in the repair of mismatches in DNA. It is required for dam-dependent methyl-directed DNA mismatch repair. May act as a 'molecular matchmaker', a protein that promotes the formation of a stable complex between two or more DNA-binding proteins in an ATP-dependent manner without itself being part of a final effector complex. This is DNA mismatch repair protein MutL from Listeria monocytogenes serotype 4a (strain HCC23).